The following is a 251-amino-acid chain: 1-(5-phosphoribosyl)-5-[(5-phosphoribosylamino)methylideneamino] imidazole-4-carboxamide isomerase (251 aa).

Residue Asp-8 is the Proton acceptor of the active site. Catalysis depends on Asp-131, which acts as the Proton donor.

This sequence belongs to the HisA/HisF family.

It is found in the cytoplasm. The enzyme catalyses 1-(5-phospho-beta-D-ribosyl)-5-[(5-phospho-beta-D-ribosylamino)methylideneamino]imidazole-4-carboxamide = 5-[(5-phospho-1-deoxy-D-ribulos-1-ylimino)methylamino]-1-(5-phospho-beta-D-ribosyl)imidazole-4-carboxamide. It participates in amino-acid biosynthesis; L-histidine biosynthesis; L-histidine from 5-phospho-alpha-D-ribose 1-diphosphate: step 4/9. This is 1-(5-phosphoribosyl)-5-[(5-phosphoribosylamino)methylideneamino] imidazole-4-carboxamide isomerase from Burkholderia ambifaria (strain MC40-6).